A 608-amino-acid chain; its full sequence is Kelch-like protein 10 (608 aa).

One can recognise a BTB domain in the interval 39 to 106 (CDVVIKVNGF…AYTRTVPITP (68 aa)). Kelch repeat units follow at residues 292-339 (ILFA…YLKG), 340-386 (YVYI…VLGN), 388-433 (IYAM…TLYG), 434-480 (KVYI…AYGE), 481-527 (HVYA…VVDD), and 529-574 (LFVV…VVPG). The residue at position 501 (S501) is a Phosphoserine.

Self-associates. Interacts with CUL3; indicative for the participation in an E3 ubiquitin ligase complex.

It is found in the cytoplasm. Its pathway is protein modification; protein ubiquitination. Functionally, may be a substrate-specific adapter of a CUL3-based E3 ubiquitin-protein ligase complex which mediates the ubiquitination and subsequent proteasomal degradation of target proteins during spermatogenesis. This chain is Kelch-like protein 10 (KLHL10), found in Homo sapiens (Human).